The chain runs to 120 residues: UPF0715 membrane protein YwlA (120 aa).

The next 4 membrane-spanning stretches (helical) occupy residues 3–23 (YNYTVLLSAFTMSVLYSVIYI), 26–46 (FIIAALITMAFYFLFPYLIFA), 63–83 (LYLLYYLAAAFIANAIIFGML), and 95–115 (AFYLFAVLTALIYWIWDSVLL).

Belongs to the UPF0715 family.

The protein localises to the cell membrane. The protein is UPF0715 membrane protein YwlA (ywlA) of Bacillus subtilis (strain 168).